We begin with the raw amino-acid sequence, 49 residues long: Protein 19.5 (49 aa).

The signal sequence occupies residues 1–23 (MFRLLLNLLRHRVTYRFLVVLCA).

The protein is Protein 19.5 of Escherichia phage T7 (Bacteriophage T7).